The following is a 321-amino-acid chain: Fibronectin type III domain-containing protein 8 (321 aa).

The region spanning 175–277 (VPEAPFVCEH…KPYKFATVAT (103 aa)) is the Fibronectin type-III domain.

The polypeptide is Fibronectin type III domain-containing protein 8 (FNDC8) (Bos taurus (Bovine)).